Here is a 416-residue protein sequence, read N- to C-terminus: Major royal jelly protein 8 (416 aa).

A signal peptide spans 1–16; sequence MIRWLLLMYLGITCQG. 8 N-linked (GlcNAc...) asparagine glycosylation sites follow: N24, N58, N93, N115, N158, N175, N196, and N215.

The protein belongs to the major royal jelly protein family. In terms of tissue distribution, expressed at very low levels in the hypopharyngeal glands of worker honey bees (at protein level). Secreted into bee venom in the sting apparatus (at protein level). Expressed in the spermatheca of adult queen bees (at protein level); expression levels are higher in mated queens than in virgin queens. Along with Mrjp9 expressed at very low levels in the head of worker bees compared to other major royal jelly proteins.

The protein resides in the secreted. Component of bee sting venom. Component of royal jelly, a substance produced in the hypopharyngeal gland containing proteins, free amino acids, fatty acids, sugars and other nutrients, which is fed to developing larvae by worker nurse bees; may be present only at trace levels. All larvae are fed some royal jelly (also known as worker jelly) early in their development but it forms the principal source of nutrition for larvae destined to become queen bees. Produced in the spermatheca of adult queen bees, along with other major royal jelly proteins, where it may act as a nutrient supply for sperm stored by mated queens, or be involved in energy metabolism. The polypeptide is Major royal jelly protein 8 (Apis mellifera (Honeybee)).